Consider the following 91-residue polypeptide: MPRPTGKKFDKRRQQQNPLFKRKKFCRFTAANVDHIDYKDLETLKDFIGENGKITPARLTGTKSHYQRQLDTAIKRARFLALVPYTDQHKA.

It belongs to the bacterial ribosomal protein bS18 family. In terms of assembly, part of the 30S ribosomal subunit. Forms a tight heterodimer with protein bS6.

In terms of biological role, binds as a heterodimer with protein bS6 to the central domain of the 16S rRNA, where it helps stabilize the platform of the 30S subunit. The protein is Small ribosomal subunit protein bS18 of Paraburkholderia phytofirmans (strain DSM 17436 / LMG 22146 / PsJN) (Burkholderia phytofirmans).